The primary structure comprises 155 residues: SsrA-binding protein (155 aa).

It belongs to the SmpB family.

The protein localises to the cytoplasm. In terms of biological role, required for rescue of stalled ribosomes mediated by trans-translation. Binds to transfer-messenger RNA (tmRNA), required for stable association of tmRNA with ribosomes. tmRNA and SmpB together mimic tRNA shape, replacing the anticodon stem-loop with SmpB. tmRNA is encoded by the ssrA gene; the 2 termini fold to resemble tRNA(Ala) and it encodes a 'tag peptide', a short internal open reading frame. During trans-translation Ala-aminoacylated tmRNA acts like a tRNA, entering the A-site of stalled ribosomes, displacing the stalled mRNA. The ribosome then switches to translate the ORF on the tmRNA; the nascent peptide is terminated with the 'tag peptide' encoded by the tmRNA and targeted for degradation. The ribosome is freed to recommence translation, which seems to be the essential function of trans-translation. The polypeptide is SsrA-binding protein (Lactococcus lactis subsp. lactis (strain IL1403) (Streptococcus lactis)).